The sequence spans 629 residues: tRNA uridine 5-carboxymethylaminomethyl modification enzyme MnmG (629 aa).

FAD is bound at residue 14–19 (GAGHAG). NAD(+) is bound at residue 274–288 (GPRYCPSIEDKVVRF).

It belongs to the MnmG family. As to quaternary structure, homodimer. Heterotetramer of two MnmE and two MnmG subunits. FAD serves as cofactor.

The protein resides in the cytoplasm. Its function is as follows. NAD-binding protein involved in the addition of a carboxymethylaminomethyl (cmnm) group at the wobble position (U34) of certain tRNAs, forming tRNA-cmnm(5)s(2)U34. The protein is tRNA uridine 5-carboxymethylaminomethyl modification enzyme MnmG of Xylella fastidiosa (strain 9a5c).